The following is a 144-amino-acid chain: Ribosome-binding factor A (144 aa).

Disordered stretches follow at residues 1 to 22 and 125 to 144; these read MPRHHQKKSSASGGGSQRQLRV and TPAVQKDLEQDPDSDREEEQ. The span at 134-144 shows a compositional bias: acidic residues; it reads QDPDSDREEEQ.

Belongs to the RbfA family. As to quaternary structure, monomer. Binds 30S ribosomal subunits, but not 50S ribosomal subunits or 70S ribosomes.

The protein localises to the cytoplasm. One of several proteins that assist in the late maturation steps of the functional core of the 30S ribosomal subunit. Associates with free 30S ribosomal subunits (but not with 30S subunits that are part of 70S ribosomes or polysomes). Required for efficient processing of 16S rRNA. May interact with the 5'-terminal helix region of 16S rRNA. In Bradyrhizobium diazoefficiens (strain JCM 10833 / BCRC 13528 / IAM 13628 / NBRC 14792 / USDA 110), this protein is Ribosome-binding factor A.